The following is a 475-amino-acid chain: UDP-N-acetylmuramate--L-alanine ligase (475 aa).

114–120 (GTHGKTT) lines the ATP pocket.

The protein belongs to the MurCDEF family.

It is found in the cytoplasm. It catalyses the reaction UDP-N-acetyl-alpha-D-muramate + L-alanine + ATP = UDP-N-acetyl-alpha-D-muramoyl-L-alanine + ADP + phosphate + H(+). It functions in the pathway cell wall biogenesis; peptidoglycan biosynthesis. Its function is as follows. Cell wall formation. The polypeptide is UDP-N-acetylmuramate--L-alanine ligase (Bartonella henselae (strain ATCC 49882 / DSM 28221 / CCUG 30454 / Houston 1) (Rochalimaea henselae)).